We begin with the raw amino-acid sequence, 268 residues long: UDP-2,3-diacylglucosamine hydrolase (268 aa).

Residues Asp-25, His-27, Asp-58, Asn-97, and His-132 each coordinate Mn(2+). 97-98 (NR) serves as a coordination point for substrate. Substrate-binding residues include Asp-140, Ser-178, Glu-191, and His-222. Mn(2+) is bound by residues His-222 and His-224.

It belongs to the LpxH family. The cofactor is Mn(2+).

Its subcellular location is the cell inner membrane. It carries out the reaction UDP-2-N,3-O-bis[(3R)-3-hydroxytetradecanoyl]-alpha-D-glucosamine + H2O = 2-N,3-O-bis[(3R)-3-hydroxytetradecanoyl]-alpha-D-glucosaminyl 1-phosphate + UMP + 2 H(+). Its pathway is glycolipid biosynthesis; lipid IV(A) biosynthesis; lipid IV(A) from (3R)-3-hydroxytetradecanoyl-[acyl-carrier-protein] and UDP-N-acetyl-alpha-D-glucosamine: step 4/6. In terms of biological role, hydrolyzes the pyrophosphate bond of UDP-2,3-diacylglucosamine to yield 2,3-diacylglucosamine 1-phosphate (lipid X) and UMP by catalyzing the attack of water at the alpha-P atom. Involved in the biosynthesis of lipid A, a phosphorylated glycolipid that anchors the lipopolysaccharide to the outer membrane of the cell. The chain is UDP-2,3-diacylglucosamine hydrolase from Ralstonia nicotianae (strain ATCC BAA-1114 / GMI1000) (Ralstonia solanacearum).